The sequence spans 497 residues: Meiosis-specific serine/threonine-protein kinase MEK1 (497 aa).

The FHA domain occupies 47 to 102 (VKVGRNDKECQLVLTNPSISSVHCVFWCVFFDEDSIPMFYVKDCSLNGTYLNGLLL). Residues 162-444 (EITNRIVGNG…SKQGLKHIWI (283 aa)) form the Protein kinase domain. ATP contacts are provided by residues 168–176 (VGNGTFGHV) and Lys199. Asp290 serves as the catalytic Proton acceptor.

It belongs to the protein kinase superfamily. CAMK Ser/Thr protein kinase family. CHEK2 subfamily.

The catalysed reaction is L-seryl-[protein] + ATP = O-phospho-L-seryl-[protein] + ADP + H(+). It carries out the reaction L-threonyl-[protein] + ATP = O-phospho-L-threonyl-[protein] + ADP + H(+). Probable protein kinase required for meiotic recombination. The sequence is that of Meiosis-specific serine/threonine-protein kinase MEK1 (MEK1) from Saccharomyces cerevisiae (strain ATCC 204508 / S288c) (Baker's yeast).